The chain runs to 174 residues: Crossover junction endodeoxyribonuclease RuvC (174 aa).

Catalysis depends on residues Asp8, Glu69, and Asp141. Positions 8, 69, and 141 each coordinate Mg(2+).

It belongs to the RuvC family. As to quaternary structure, homodimer which binds Holliday junction (HJ) DNA. The HJ becomes 2-fold symmetrical on binding to RuvC with unstacked arms; it has a different conformation from HJ DNA in complex with RuvA. In the full resolvosome a probable DNA-RuvA(4)-RuvB(12)-RuvC(2) complex forms which resolves the HJ. Mg(2+) serves as cofactor.

The protein localises to the cytoplasm. It carries out the reaction Endonucleolytic cleavage at a junction such as a reciprocal single-stranded crossover between two homologous DNA duplexes (Holliday junction).. Its function is as follows. The RuvA-RuvB-RuvC complex processes Holliday junction (HJ) DNA during genetic recombination and DNA repair. Endonuclease that resolves HJ intermediates. Cleaves cruciform DNA by making single-stranded nicks across the HJ at symmetrical positions within the homologous arms, yielding a 5'-phosphate and a 3'-hydroxyl group; requires a central core of homology in the junction. The consensus cleavage sequence is 5'-(A/T)TT(C/G)-3'. Cleavage occurs on the 3'-side of the TT dinucleotide at the point of strand exchange. HJ branch migration catalyzed by RuvA-RuvB allows RuvC to scan DNA until it finds its consensus sequence, where it cleaves and resolves the cruciform DNA. This Xanthomonas axonopodis pv. citri (strain 306) protein is Crossover junction endodeoxyribonuclease RuvC.